The chain runs to 102 residues: Large ribosomal subunit protein mL63 (102 aa).

The protein belongs to the mitochondrion-specific ribosomal protein mL63 family.

The protein resides in the mitochondrion. This Mus musculus (Mouse) protein is Large ribosomal subunit protein mL63 (Mrpl57).